The primary structure comprises 340 residues: Selenide, water dikinase (340 aa).

Sec17 is an active-site residue. A non-standard amino acid (selenocysteine) is located at residue Sec17. Residues Lys20 and 45–47 (NNE) contribute to the ATP site. Asp48 contacts Mg(2+). ATP contacts are provided by residues Asp65, Asp88, and 136-138 (GHT). Asp88 is a Mg(2+) binding site. Asp224 serves as a coordination point for Mg(2+).

The protein belongs to the selenophosphate synthase 1 family. Class I subfamily. Homodimer. It depends on Mg(2+) as a cofactor.

It carries out the reaction hydrogenselenide + ATP + H2O = selenophosphate + AMP + phosphate + 2 H(+). Synthesizes selenophosphate from selenide and ATP. This chain is Selenide, water dikinase, found in Campylobacter jejuni subsp. jejuni serotype O:2 (strain ATCC 700819 / NCTC 11168).